The sequence spans 245 residues: 3-deoxy-manno-octulosonate cytidylyltransferase (245 aa).

The protein belongs to the KdsB family.

It is found in the cytoplasm. The catalysed reaction is 3-deoxy-alpha-D-manno-oct-2-ulosonate + CTP = CMP-3-deoxy-beta-D-manno-octulosonate + diphosphate. The protein operates within nucleotide-sugar biosynthesis; CMP-3-deoxy-D-manno-octulosonate biosynthesis; CMP-3-deoxy-D-manno-octulosonate from 3-deoxy-D-manno-octulosonate and CTP: step 1/1. It functions in the pathway bacterial outer membrane biogenesis; lipopolysaccharide biosynthesis. Functionally, activates KDO (a required 8-carbon sugar) for incorporation into bacterial lipopolysaccharide in Gram-negative bacteria. The protein is 3-deoxy-manno-octulosonate cytidylyltransferase of Rhodopseudomonas palustris (strain ATCC BAA-98 / CGA009).